Here is a 257-residue protein sequence, read N- to C-terminus: Global transcriptional regulator CodY (257 aa).

Residues 1–155 form a GAF domain region; sequence MSLLSKTREL…AATVIGMEIL (155 aa). Residues 203 to 222 constitute a DNA-binding region (H-T-H motif); the sequence is ASKVADRVGITRSVIVNALR.

Belongs to the CodY family.

Its subcellular location is the cytoplasm. DNA-binding global transcriptional regulator which is involved in the adaptive response to starvation and acts by directly or indirectly controlling the expression of numerous genes in response to nutrient availability. During rapid exponential growth, CodY is highly active and represses genes whose products allow adaptation to nutrient depletion. The sequence is that of Global transcriptional regulator CodY from Staphylococcus epidermidis (strain ATCC 12228 / FDA PCI 1200).